Reading from the N-terminus, the 425-residue chain is Enolase (425 aa).

(2R)-2-phosphoglycerate is bound at residue Q163. The active-site Proton donor is the E205. 3 residues coordinate Mg(2+): D242, E285, and D312. (2R)-2-phosphoglycerate-binding residues include K337, R366, S367, and K388. K337 functions as the Proton acceptor in the catalytic mechanism.

Belongs to the enolase family. The cofactor is Mg(2+).

It is found in the cytoplasm. Its subcellular location is the secreted. The protein localises to the cell surface. The catalysed reaction is (2R)-2-phosphoglycerate = phosphoenolpyruvate + H2O. Its pathway is carbohydrate degradation; glycolysis; pyruvate from D-glyceraldehyde 3-phosphate: step 4/5. Its function is as follows. Catalyzes the reversible conversion of 2-phosphoglycerate (2-PG) into phosphoenolpyruvate (PEP). It is essential for the degradation of carbohydrates via glycolysis. In Cereibacter sphaeroides (strain ATCC 17029 / ATH 2.4.9) (Rhodobacter sphaeroides), this protein is Enolase.